The chain runs to 292 residues: Glycine--tRNA ligase alpha subunit (292 aa).

It belongs to the class-II aminoacyl-tRNA synthetase family. In terms of assembly, tetramer of two alpha and two beta subunits.

The protein resides in the cytoplasm. It carries out the reaction tRNA(Gly) + glycine + ATP = glycyl-tRNA(Gly) + AMP + diphosphate. The protein is Glycine--tRNA ligase alpha subunit of Desulfovibrio desulfuricans (strain ATCC 27774 / DSM 6949 / MB).